The sequence spans 962 residues: MVPGEVHMSDTPSGPHPIIPRTIRLAAIPILLCWLGFTVFVSVAVPPLEAIGETRAVAVAPDDAQSMRAMRRAGKVFNEFDSNSIAMVVLESDQPLGEKAHRYYDHLVDTLVLDQSHIQHIQDFWRDPLTAAGAVSADGKAAYVQLYLAGNMGEALANESVEAVRKIVANSTPPEGIRTYVTGPAALFADQIAAGDRSMKLITGLTFAVITVLLLLVYRSIATTLLILPMVFIGLGATRGTIAFLGYHGMVGLSTFVVNILTALAIAAGTDYAIFLVGRYQEARHIGQNREASFYTMYRGTANVILGSGLTIAGATYCLSFARLTLFHTMGPPLAIGMLVSVAAALTLAPAIIAIAGRFGLLDPKRRLKTRGWRRVGTAVVRWPGPILATSVALALVGLLALPGYRPGYNDRYYLRAGTPVNRGYAAADRHFGPARMNPEMLLVESDQDMRNPAGMLVIDKIAKEVLHVSGVERVQAITRPQGVPLEHASIPFQISMMGATQTMSLPYMRERMADMLTMSDEMLVAINSMEQMLDLVQQLNDVTHEMAATTREIKATTSELRDHLADIDDFVRPLRSYFYWEHHCFDIPLCSATRSLFDTLDGVDTLTDQLRALTDDMNKMEALTPQFLALLPPMITTMKTMRTMMLTMRSTISGVQDQMADMQDHATAMGQAFDTAKSGDSFYLPPEAFDNAEFQQGMKLFLSPNGKAVRFVISHESDPASTEGIDRIEAIRAATKDAIKATPLQGAKIYIGGTAATYQDIRDGTKYDILIVGIAAVCLVFIVMLMITQSLIASLVIVGTVLLSLGTAFGLSVLIWQHFVGLQVHWTIVAMSVIVLLAVGSDYNLLLVSRFKEEVGAGLKTGIIRAMAGTGAVVTSAGLVFAFTMASMAVSELRVIGQVGTTIGLGLLFDTLVVRSFMTPSIAALLGRWFWWPNMIHSRPTVPEAHTRQGARRIQPHLHRG.

12 helical membrane-spanning segments follow: residues 25–45, 201–223, 225–247, 256–276, 302–322, 335–355, 383–403, 768–788, 796–816, 820–840, 867–887, and 895–915; these read LAAI…SVAV, LITG…SIAT, LLIL…FLGY, FVVN…AIFL, ANVI…LSFA, AIGM…IIAI, WPGP…LALP, YDIL…MLMI, LVIV…SVLI, FVGL…LLAV, AMAG…FTMA, and RVIG…TLVV.

Belongs to the resistance-nodulation-cell division (RND) (TC 2.A.6) family. MmpL subfamily.

It is found in the cell membrane. This Mycobacterium tuberculosis (strain ATCC 25618 / H37Rv) protein is Probable transport protein MmpL9 (mmpL9).